Consider the following 288-residue polypeptide: Pantothenate synthetase (288 aa).

ATP is bound at residue 30–37 (MGALHEGH). Histidine 37 functions as the Proton donor in the catalytic mechanism. A (R)-pantoate-binding site is contributed by glutamine 61. Glutamine 61 lines the beta-alanine pocket. Position 147 to 150 (147 to 150 (GEKD)) interacts with ATP. Glutamine 153 contributes to the (R)-pantoate binding site. Residues leucine 176 and 184–187 (ISSR) contribute to the ATP site.

The protein belongs to the pantothenate synthetase family. Homodimer.

The protein localises to the cytoplasm. The catalysed reaction is (R)-pantoate + beta-alanine + ATP = (R)-pantothenate + AMP + diphosphate + H(+). The protein operates within cofactor biosynthesis; (R)-pantothenate biosynthesis; (R)-pantothenate from (R)-pantoate and beta-alanine: step 1/1. Functionally, catalyzes the condensation of pantoate with beta-alanine in an ATP-dependent reaction via a pantoyl-adenylate intermediate. In Prosthecochloris aestuarii (strain DSM 271 / SK 413), this protein is Pantothenate synthetase.